The following is a 409-amino-acid chain: Aspartic protease pepA (409 aa).

The signal sequence occupies residues Met1–Ala19. Positions Ser20–Ala65 are cleaved as a propeptide — activation peptide. Positions Tyr97–Ala404 constitute a Peptidase A1 domain. Active-site residues include Asp113 and Asp293. A disulfide bridge links Cys329 with Cys364. A glycan (N-linked (GlcNAc...) asparagine) is linked at Asn335.

Belongs to the peptidase A1 family. As to quaternary structure, monomer.

The protein resides in the secreted. Its function is as follows. Secreted aspartic endopeptidase that allows assimilation of proteinaceous substrates. The scissile peptide bond is attacked by a nucleophilic water molecule activated by two aspartic residues in the active site. Shows a broad primary substrate specificity. Favors hydrophobic residues at the P1 and P1' positions. This is Aspartic protease pepA from Leptosphaeria maculans (strain JN3 / isolate v23.1.3 / race Av1-4-5-6-7-8) (Blackleg fungus).